Reading from the N-terminus, the 536-residue chain is Interferon alpha/beta receptor 2 (536 aa).

The signal sequence occupies residues 1 to 26 (MLLSQNVSAIGPLNLYPMVHISLVFG). Over 27 to 246 (ISYVVPDLSD…RESESSEPAT (220 aa)) the chain is Extracellular. 2 disulfides stabilise this stretch: cysteine 39–cysteine 122 and cysteine 85–cysteine 93. 5 N-linked (GlcNAc...) asparagine glycosylation sites follow: asparagine 58, asparagine 87, asparagine 101, asparagine 147, and asparagine 191. An intrachain disulfide couples cysteine 210 to cysteine 230. The helical transmembrane segment at 247-267 (IGGILILFLLAAVCISTVMIL) threads the bilayer. Residues 268–536 (KRIGYICLRN…VRQVNLKNFN (269 aa)) are Cytoplasmic-facing. Tyrosine 340 carries the post-translational modification Phosphotyrosine. Tandem repeats lie at residues 358–362 (SLEDC), 363–367 (SLEDC), and 368–372 (SLEDC). Residues 358–372 (SLEDCSLEDCSLEDC) form a 3 X 5 AA tandem repeats of S-L-E-D-C region. Residues 369 to 434 (LEDCSDPSAE…SDSTEGSEGR (66 aa)) form a disordered region. Residues 420 to 429 (TSEEDSDSTE) show a composition bias toward acidic residues. The interval 432-456 (EGRIVFNVNLNSVCVRALEDDKDSE) is mediates interaction with STAT2 (and required for the recruitment of USP18). Serine 480 carries the post-translational modification Phosphoserine. The interval 487–522 (EEGTQLPFTDPSMECLRPQDALSDKSDTSESDVDIG) is disordered. Position 525 is a phosphotyrosine (tyrosine 525).

It belongs to the type II cytokine receptor family. As to quaternary structure, heterodimer with IFNAR1; forming the receptor for type I interferon. Interacts with the transcriptional factors STAT1 and STAT2. Interacts with JAK1. Interacts with USP18; indirectly via STAT2, it negatively regulates the assembly of the ternary interferon-IFNAR1-IFNAR2 complex and therefore type I interferon signaling. Post-translationally, phosphorylated on tyrosine residues upon interferon binding. Phosphorylation at Tyr-340 or Tyr-525 are sufficient to mediate interferon dependent activation of STAT1, STAT2 and STAT3 leading to antiproliferative effects on many different cell types. In terms of tissue distribution, expressed in the endometrium. Expressed in all tissues examined except conceptus at day 15 of pregnancy.

It is found in the cell membrane. Functionally, together with IFNAR1, forms the heterodimeric receptor for type I interferons (including interferons alpha, beta, epsilon, omega and kappa). Type I interferon binding activates the JAK-STAT signaling cascade, resulting in transcriptional activation or repression of interferon-regulated genes that encode the effectors of the interferon response. Mechanistically, type I interferon-binding brings the IFNAR1 and IFNAR2 subunits into close proximity with one another, driving their associated Janus kinases (JAKs) (TYK2 bound to IFNAR1 and JAK1 bound to IFNAR2) to cross-phosphorylate one another. The activated kinases phosphorylate specific tyrosine residues on the intracellular domains of IFNAR1 and IFNAR2, forming docking sites for the STAT transcription factors (STAT1, STAT2 and STAT). STAT proteins are then phosphorylated by the JAKs, promoting their translocation into the nucleus to regulate expression of interferon-regulated genes. In Ovis aries (Sheep), this protein is Interferon alpha/beta receptor 2 (IFNAR2).